The primary structure comprises 90 residues: Mitochondrial import inner membrane translocase subunit Tim8 A (90 aa).

A Twin CX3C motif motif is present at residues 36-59 (CWDKCMDKPGPKLDSRAEMCFVNC). Intrachain disulfides connect Cys-36/Cys-59 and Cys-40/Cys-55.

The protein belongs to the small Tim family. Heterohexamer; composed of 3 copies of TIMM8A and 3 copies of TIMM13, named soluble 70 kDa complex. Associates with the TIM22 complex, whose core is composed of TIMM22.

It localises to the mitochondrion inner membrane. Its function is as follows. Mitochondrial intermembrane chaperone that participates in the import and insertion of some multi-pass transmembrane proteins into the mitochondrial inner membrane. Also required for the transfer of beta-barrel precursors from the TOM complex to the sorting and assembly machinery (SAM complex) of the outer membrane. Acts as a chaperone-like protein that protects the hydrophobic precursors from aggregation and guide them through the mitochondrial intermembrane space. The TIMM8-TIMM13 complex mediates the import of some proteins while the predominant TIMM9-TIMM10 70 kDa complex mediates the import of much more proteins. The sequence is that of Mitochondrial import inner membrane translocase subunit Tim8 A (timm8a) from Takifugu rubripes (Japanese pufferfish).